A 338-amino-acid chain; its full sequence is MRQVTVTEHLLLHQTKSPAATGQFTALLYDLILAAKIISKSVNKAGLLDVLGGTGQVNVQGEHVQKLDEYANRVLIHRMERTGVLCAMASEENADLIRVPERFEAGDYILIFDPLDGSSNIDVNINVGTIFSILKRKPGASGSKDVTLGDVLQSGVEQVAAGYFLYGPSTMLVYSSGQGVHGFTLDPSVGEFLLSHPDIRYPEQGRIYSVNESYWHYWDEPTREVVSYFKGPDNPLGKPYSLRYVGSLVADFHRNLFYGGIFMYPMDYRLPEKPQGKLRLMCEASPLAFLAEQAGGRATDGTKRILDIVPGELHQRVPLFIGSAGDVDAVEAIYRRHS.

Positions 91, 113, 115, and 116 each coordinate Mg(2+). Residues 116–119, Asn-211, Tyr-244, and Lys-277 each bind substrate; that span reads DGSS. Glu-283 lines the Mg(2+) pocket.

Belongs to the FBPase class 1 family. In terms of assembly, homotetramer. Requires Mg(2+) as cofactor.

It is found in the cytoplasm. It catalyses the reaction beta-D-fructose 1,6-bisphosphate + H2O = beta-D-fructose 6-phosphate + phosphate. The protein operates within carbohydrate biosynthesis; gluconeogenesis. The protein is Fructose-1,6-bisphosphatase class 1 of Oleidesulfovibrio alaskensis (strain ATCC BAA-1058 / DSM 17464 / G20) (Desulfovibrio alaskensis).